The sequence spans 486 residues: Citrate synthase 3, mitochondrial (486 aa).

A mitochondrion-targeting transit peptide spans 1–23; the sequence is MVQRLLPGAHICRRSFNSSAIIK. Residues H315, H361, and D419 contribute to the active site. The Microbody targeting signal motif lies at 484–486; that stretch reads NKL.

Belongs to the citrate synthase family.

The protein resides in the mitochondrion. The catalysed reaction is oxaloacetate + acetyl-CoA + H2O = citrate + CoA + H(+). It functions in the pathway carbohydrate metabolism; tricarboxylic acid cycle; isocitrate from oxaloacetate: step 1/2. Functionally, dual specificity mitochondrial citrate and methylcitrate synthase with similar catalytic efficiency with both acetyl-CoA and propionyl-CoA. In Saccharomyces cerevisiae (strain ATCC 204508 / S288c) (Baker's yeast), this protein is Citrate synthase 3, mitochondrial.